We begin with the raw amino-acid sequence, 427 residues long: Adenylosuccinate synthetase (427 aa).

GTP-binding positions include 12 to 18 and 40 to 42; these read GDEGKGK and GHT. D13 (proton acceptor) is an active-site residue. 2 residues coordinate Mg(2+): D13 and G40. IMP is bound by residues 13-16, 38-41, T130, R144, Q224, T239, and R303; these read DEGK and NAGH. H41 serves as the catalytic Proton donor. Residue 299 to 305 coordinates substrate; that stretch reads SVTGRPR. Residues R305, 331–333, and 411–413 each bind GTP; these read KLD and SVG.

It belongs to the adenylosuccinate synthetase family. Homodimer. The cofactor is Mg(2+).

The protein resides in the cytoplasm. The enzyme catalyses IMP + L-aspartate + GTP = N(6)-(1,2-dicarboxyethyl)-AMP + GDP + phosphate + 2 H(+). The protein operates within purine metabolism; AMP biosynthesis via de novo pathway; AMP from IMP: step 1/2. Its function is as follows. Plays an important role in the de novo pathway of purine nucleotide biosynthesis. Catalyzes the first committed step in the biosynthesis of AMP from IMP. The chain is Adenylosuccinate synthetase from Sorangium cellulosum (strain So ce56) (Polyangium cellulosum (strain So ce56)).